The primary structure comprises 492 residues: Bifunctional purine biosynthesis protein PurH (492 aa).

In terms of domain architecture, MGS-like spans Met-1–Val-144.

It belongs to the PurH family.

It carries out the reaction (6R)-10-formyltetrahydrofolate + 5-amino-1-(5-phospho-beta-D-ribosyl)imidazole-4-carboxamide = 5-formamido-1-(5-phospho-D-ribosyl)imidazole-4-carboxamide + (6S)-5,6,7,8-tetrahydrofolate. The catalysed reaction is IMP + H2O = 5-formamido-1-(5-phospho-D-ribosyl)imidazole-4-carboxamide. It functions in the pathway purine metabolism; IMP biosynthesis via de novo pathway; 5-formamido-1-(5-phospho-D-ribosyl)imidazole-4-carboxamide from 5-amino-1-(5-phospho-D-ribosyl)imidazole-4-carboxamide (10-formyl THF route): step 1/1. Its pathway is purine metabolism; IMP biosynthesis via de novo pathway; IMP from 5-formamido-1-(5-phospho-D-ribosyl)imidazole-4-carboxamide: step 1/1. This Staphylococcus aureus (strain USA300) protein is Bifunctional purine biosynthesis protein PurH.